We begin with the raw amino-acid sequence, 142 residues long: MVLSADDKSNVKAAWGKVGGNAGEFGAEALERMFLGFPTTKTYFPHFDLSHGSAQVKAHGKKVGDALTLAVGHLDDLPGALSNLSDLHAHKLRVDPVNFKLLSHCLLSTLAVHLPNDFTPAVHASLDKFLSTVSTVLTSKYR.

Residues 2 to 142 (VLSADDKSNV…VSTVLTSKYR (141 aa)) enclose the Globin domain. Residue His59 coordinates O2. His88 lines the heme b pocket.

This sequence belongs to the globin family. In terms of assembly, heterotetramer of two alpha chains and two beta chains. As to expression, red blood cells.

In terms of biological role, involved in oxygen transport from the lung to the various peripheral tissues. Hemopressin acts as an antagonist peptide of the cannabinoid receptor CNR1. Hemopressin-binding efficiently blocks cannabinoid receptor CNR1 and subsequent signaling. In Equus quagga burchellii (Burchell's zebra), this protein is Hemoglobin subunit alpha-1 (HBA1).